The following is a 430-amino-acid chain: Enolase (430 aa).

Glutamine 165 contacts (2R)-2-phosphoglycerate. Catalysis depends on glutamate 207, which acts as the Proton donor. Positions 244, 287, and 314 each coordinate Mg(2+). The (2R)-2-phosphoglycerate site is built by lysine 339, arginine 368, serine 369, and lysine 390. Catalysis depends on lysine 339, which acts as the Proton acceptor.

This sequence belongs to the enolase family. As to quaternary structure, component of the RNA degradosome, a multiprotein complex involved in RNA processing and mRNA degradation. Requires Mg(2+) as cofactor.

It localises to the cytoplasm. The protein localises to the secreted. It is found in the cell surface. The enzyme catalyses (2R)-2-phosphoglycerate = phosphoenolpyruvate + H2O. It functions in the pathway carbohydrate degradation; glycolysis; pyruvate from D-glyceraldehyde 3-phosphate: step 4/5. Its function is as follows. Catalyzes the reversible conversion of 2-phosphoglycerate (2-PG) into phosphoenolpyruvate (PEP). It is essential for the degradation of carbohydrates via glycolysis. This is Enolase from Xanthomonas campestris pv. campestris (strain 8004).